A 208-amino-acid polypeptide reads, in one-letter code: Hemocyanin, units E and F (208 aa).

H1 contacts Cu cation. Residues 1 to 74 are unit E; that stretch reads HGLPAQCPNA…HDLESVRGNL (74 aa). A disulfide bridge links C7 with C18. Positions 19 to 21 form a cross-link, 2'-(S-cysteinyl)-histidine (Cys-His); the sequence is CLH. N43 carries an N-linked (GlcNAc...) asparagine glycan. The tract at residues 75–208 is unit F; it reads VRKNVDRLSL…GHLSLLSPET (134 aa). A Cu cation-binding site is contributed by H113. A disulfide bridge connects residues C119 and C130. Residues 131–133 constitute a cross-link (2'-(S-cysteinyl)-histidine (Cys-His)); the sequence is CLH. 2 residues coordinate Cu cation: H133 and H142.

The protein belongs to the tyrosinase family. Hemocyanin subfamily. Decamers of large identical subunits (390 kDa), each containing 8 globular oxygen-binding functional units. The cofactor is Cu(2+).

Hemocyanins are copper-containing oxygen carriers occurring freely dissolved in the hemolymph of many mollusks and arthropods. The chain is Hemocyanin, units E and F from Sepia officinalis (Common cuttlefish).